The chain runs to 370 residues: A-type ATP synthase subunit C (370 aa).

Belongs to the V-ATPase V0D/AC39 subunit family. As to quaternary structure, has multiple subunits with at least A(3), B(3), C, D, E, F, H, I and proteolipid K(x).

Its subcellular location is the cell membrane. Its function is as follows. Component of the A-type ATP synthase that produces ATP from ADP in the presence of a proton gradient across the membrane. The protein is A-type ATP synthase subunit C of Pyrococcus abyssi (strain GE5 / Orsay).